A 230-amino-acid chain; its full sequence is Cytidylate kinase (230 aa).

Residue 12-20 (GPSGAGKGT) participates in ATP binding.

Belongs to the cytidylate kinase family. Type 1 subfamily.

It is found in the cytoplasm. The enzyme catalyses CMP + ATP = CDP + ADP. It carries out the reaction dCMP + ATP = dCDP + ADP. The chain is Cytidylate kinase from Shewanella oneidensis (strain ATCC 700550 / JCM 31522 / CIP 106686 / LMG 19005 / NCIMB 14063 / MR-1).